Here is a 469-residue protein sequence, read N- to C-terminus: Crinkler effector protein 1 (469 aa).

Residues 1–17 (MSITLLCLIKGNTLANA) form the signal peptide. Residues 18–57 (FPVDIDKDQLVGHLKKVIKAEQPQTFANVDAKDLKLWRVP) are LQLFLAK-like domain. Residues 58–96 (ISDDHDDQLRNLSLEDSDELLAIRKISKYFPDSPPEECI) are DWL domain. Asn-68 carries an N-linked (GlcNAc...) asparagine glycan. The HVLVXXP motif signature appears at 97 to 103 (HVLVEPP). Asn-126, Asn-181, and Asn-248 each carry an N-linked (GlcNAc...) asparagine glycan.

This sequence belongs to the Crinkler effector family. In terms of assembly, homodimer.

Its subcellular location is the secreted. It is found in the host nucleus. Its function is as follows. Effector that participates in the arbuscule development step of the symbiosis. Arbuscular mycorrhizal (AM) symbiosis is one of the most prominent and beneficial plant-microbe interactions that facilitates mineral nutrition and confers tolerance to biotic and abiotic stresses. Is not involved in cell death processes. This Rhizophagus irregularis (strain DAOM 181602 / DAOM 197198 / MUCL 43194) (Arbuscular mycorrhizal fungus) protein is Crinkler effector protein 1.